We begin with the raw amino-acid sequence, 708 residues long: Matrix metalloproteinase-9 (708 aa).

The signal sequence occupies residues 1–19 (MSPWQPLLLVLLALGYSFA). A propeptide spans 20–107 (APHQRQPTYV…PRCGVPDVGK (88 aa)) (activation peptide). A glycan (N-linked (GlcNAc...) asparagine) is linked at Asn-39. The short motif at 98–105 (PRCGVPDV) is the Cysteine switch element. Cys-100 is a Zn(2+) binding site. A glycan (N-linked (GlcNAc...) asparagine) is linked at Asn-121. 2 residues coordinate Ca(2+): Asp-132 and Asp-166. Residues His-176 and Asp-178 each coordinate Zn(2+). Ca(2+)-binding residues include Asp-183, Gly-184, Asp-186, and Leu-188. His-191 contacts Zn(2+). The Ca(2+) site is built by Gly-198, Gln-200, and Asp-202. His-204 lines the Zn(2+) pocket. The Ca(2+) site is built by Asp-206, Asp-207, and Glu-209. Fibronectin type-II domains are found at residues 226–274 (ANGA…FCPS), 284–332 (GDGK…FCPT), and 343–391 (SAGE…FCPD). 6 disulfides stabilise this stretch: Cys-231–Cys-257, Cys-245–Cys-272, Cys-289–Cys-315, Cys-303–Cys-330, Cys-348–Cys-374, and Cys-362–Cys-389. Zn(2+) is bound at residue His-402. Residue Glu-403 is part of the active site. 2 residues coordinate Zn(2+): His-406 and His-412. The tract at residues 441–520 (HHLYGRGSKP…SSTPDDNPCN (80 aa)) is disordered. Residues 480–490 (PTGGPTVAPTG) show a composition bias toward low complexity. Residues 491–502 (APSPGPTGPPTA) are compositionally biased toward pro residues. Cys-519 and Cys-707 are disulfide-bonded. 4 Hemopexin repeats span residues 521 to 566 (VDVF…WPAF), 567 to 611 (PSKL…GLGS), 613 to 660 (VTLV…FSGV), and 661 to 707 (PWNS…LLQC).

It belongs to the peptidase M10A family. In terms of assembly, exists as monomer or homodimer; disulfide-linked. Also exists as heterodimer with LCN2. Macrophages and transformed cell lines produce only the monomeric form. Interacts with ECM1. Requires Zn(2+) as cofactor. Ca(2+) serves as cofactor. Post-translationally, N- and O-glycosylated.

The protein resides in the secreted. Its subcellular location is the extracellular space. The protein localises to the extracellular matrix. The enzyme catalyses Cleavage of gelatin types I and V and collagen types IV and V.. Matrix metalloproteinase that plays an essential role in local proteolysis of the extracellular matrix and in leukocyte migration. Could play a role in bone osteoclastic resorption. Cleaves KiSS1 at a Gly-|-Leu bond. Cleaves NINJ1 to generate the Secreted ninjurin-1 form. Cleaves type IV and type V collagen into large C-terminal three quarter fragments and shorter N-terminal one quarter fragments. Degrades fibronectin but not laminin or Pz-peptide. The protein is Matrix metalloproteinase-9 (Mmp9) of Rattus norvegicus (Rat).